The following is a 128-amino-acid chain: Glycine cleavage system H protein (128 aa).

In terms of domain architecture, Lipoyl-binding spans 25–107 (TITVGITHHA…YGAGWFFKIK (83 aa)). K66 carries the post-translational modification N6-lipoyllysine.

It belongs to the GcvH family. The glycine cleavage system is composed of four proteins: P, T, L and H. (R)-lipoate serves as cofactor.

Functionally, the glycine cleavage system catalyzes the degradation of glycine. The H protein shuttles the methylamine group of glycine from the P protein to the T protein. This Neisseria meningitidis serogroup C (strain 053442) protein is Glycine cleavage system H protein.